Here is a 217-residue protein sequence, read N- to C-terminus: Small ribosomal subunit protein uS3 (217 aa).

One can recognise a KH type-2 domain in the interval 38 to 106; it reads IRKFVQKELA…QVHINIIEIK (69 aa).

Belongs to the universal ribosomal protein uS3 family. As to quaternary structure, part of the 30S ribosomal subunit. Forms a tight complex with proteins S10 and S14.

Functionally, binds the lower part of the 30S subunit head. Binds mRNA in the 70S ribosome, positioning it for translation. In Streptococcus gordonii (strain Challis / ATCC 35105 / BCRC 15272 / CH1 / DL1 / V288), this protein is Small ribosomal subunit protein uS3.